We begin with the raw amino-acid sequence, 132 residues long: Small ribosomal subunit protein uS9 (132 aa).

Positions 103–132 (NGLLTRDDRTKERKKPGLKRARKAPQYTKR) are disordered. Positions 114-132 (ERKKPGLKRARKAPQYTKR) are enriched in basic residues.

It belongs to the universal ribosomal protein uS9 family.

This chain is Small ribosomal subunit protein uS9, found in Dehalococcoides mccartyi (strain CBDB1).